Reading from the N-terminus, the 397-residue chain is Acetate kinase 2 (397 aa).

Position 10 (Asn10) interacts with Mg(2+). Lys17 is an ATP binding site. Arg90 contributes to the substrate binding site. Asp147 serves as the catalytic Proton donor/acceptor. ATP is bound by residues 207 to 211, 281 to 283, and 329 to 333; these read HLGNG, DAR, and GIGEN. Mg(2+) is bound at residue Glu385.

Belongs to the acetokinase family. In terms of assembly, homodimer. Requires Mg(2+) as cofactor. It depends on Mn(2+) as a cofactor.

It localises to the cytoplasm. The catalysed reaction is acetate + ATP = acetyl phosphate + ADP. Its pathway is metabolic intermediate biosynthesis; acetyl-CoA biosynthesis; acetyl-CoA from acetate: step 1/2. Catalyzes the formation of acetyl phosphate from acetate and ATP. Can also catalyze the reverse reaction. The polypeptide is Acetate kinase 2 (Vibrio vulnificus (strain CMCP6)).